We begin with the raw amino-acid sequence, 123 residues long: Small ribosomal subunit protein uS12 (123 aa).

The tract at residues 1-22 (MATINQLVRQPRKRSVEKSDVP) is disordered. Asp89 is modified (3-methylthioaspartic acid). The segment at 100–123 (GSLDTSGVKGRNQGRSKYGTKRPK) is disordered. Basic residues predominate over residues 111 to 123 (NQGRSKYGTKRPK).

This sequence belongs to the universal ribosomal protein uS12 family. Part of the 30S ribosomal subunit. Contacts proteins S8 and S17. May interact with IF1 in the 30S initiation complex.

In terms of biological role, with S4 and S5 plays an important role in translational accuracy. Functionally, interacts with and stabilizes bases of the 16S rRNA that are involved in tRNA selection in the A site and with the mRNA backbone. Located at the interface of the 30S and 50S subunits, it traverses the body of the 30S subunit contacting proteins on the other side and probably holding the rRNA structure together. The combined cluster of proteins S8, S12 and S17 appears to hold together the shoulder and platform of the 30S subunit. This chain is Small ribosomal subunit protein uS12, found in Pseudomonas putida (strain GB-1).